The following is a 309-amino-acid chain: Probable manganese-dependent inorganic pyrophosphatase (309 aa).

Residues His-9, Asp-13, Asp-15, Asp-75, His-97, and Asp-149 each coordinate Mn(2+).

The protein belongs to the PPase class C family. The cofactor is Mn(2+).

The protein resides in the cytoplasm. It carries out the reaction diphosphate + H2O = 2 phosphate + H(+). The chain is Probable manganese-dependent inorganic pyrophosphatase from Bacillus licheniformis (strain ATCC 14580 / DSM 13 / JCM 2505 / CCUG 7422 / NBRC 12200 / NCIMB 9375 / NCTC 10341 / NRRL NRS-1264 / Gibson 46).